Consider the following 339-residue polypeptide: Serine/threonine-protein kinase pdik1l-A (339 aa).

The 325-residue stretch at 8–332 (YDLIREVGRG…LELKLIQIAF (325 aa)) folds into the Protein kinase domain. Residues 14–22 (VGRGSYGVV) and lysine 37 each bind ATP. The active-site Proton acceptor is the aspartate 164.

It belongs to the protein kinase superfamily. Ser/Thr protein kinase family.

The protein resides in the nucleus. The enzyme catalyses L-seryl-[protein] + ATP = O-phospho-L-seryl-[protein] + ADP + H(+). It carries out the reaction L-threonyl-[protein] + ATP = O-phospho-L-threonyl-[protein] + ADP + H(+). The protein is Serine/threonine-protein kinase pdik1l-A (pdik1-a) of Xenopus laevis (African clawed frog).